The following is a 34-amino-acid chain: Tryptophanase operon leader peptide (34 aa).

This Proteus vulgaris protein is Tryptophanase operon leader peptide (tnaL).